A 139-amino-acid chain; its full sequence is D-ribose pyranase (139 aa).

Catalysis depends on H20, which acts as the Proton donor. Residues D28, H106, and 128-130 (YAN) contribute to the substrate site.

Belongs to the RbsD / FucU family. RbsD subfamily. As to quaternary structure, homodecamer.

Its subcellular location is the cytoplasm. The enzyme catalyses beta-D-ribopyranose = beta-D-ribofuranose. Its pathway is carbohydrate metabolism; D-ribose degradation; D-ribose 5-phosphate from beta-D-ribopyranose: step 1/2. Catalyzes the interconversion of beta-pyran and beta-furan forms of D-ribose. In Actinobacillus pleuropneumoniae serotype 5b (strain L20), this protein is D-ribose pyranase.